A 290-amino-acid chain; its full sequence is NAD kinase (290 aa).

Asp-72 serves as the catalytic Proton acceptor. Residues 72 to 73 (DG), Lys-77, 145 to 146 (NE), Asp-175, 186 to 191 (TAYSLS), and Ala-210 each bind NAD(+).

Belongs to the NAD kinase family. It depends on a divalent metal cation as a cofactor.

It localises to the cytoplasm. The catalysed reaction is NAD(+) + ATP = ADP + NADP(+) + H(+). Involved in the regulation of the intracellular balance of NAD and NADP, and is a key enzyme in the biosynthesis of NADP. Catalyzes specifically the phosphorylation on 2'-hydroxyl of the adenosine moiety of NAD to yield NADP. This Bacteroides fragilis (strain YCH46) protein is NAD kinase.